Consider the following 276-residue polypeptide: NADPH-dependent 7-cyano-7-deazaguanine reductase (276 aa).

83-85 (IES) provides a ligand contact to substrate. Residue 85 to 86 (SK) coordinates NADPH. Cys184 acts as the Thioimide intermediate in catalysis. The active-site Proton donor is Asp191. 223–224 (HE) contributes to the substrate binding site. 252 to 253 (RG) provides a ligand contact to NADPH.

Belongs to the GTP cyclohydrolase I family. QueF type 2 subfamily. As to quaternary structure, homodimer.

The protein resides in the cytoplasm. It carries out the reaction 7-aminomethyl-7-carbaguanine + 2 NADP(+) = 7-cyano-7-deazaguanine + 2 NADPH + 3 H(+). It participates in tRNA modification; tRNA-queuosine biosynthesis. In terms of biological role, catalyzes the NADPH-dependent reduction of 7-cyano-7-deazaguanine (preQ0) to 7-aminomethyl-7-deazaguanine (preQ1). In Pseudomonas syringae pv. syringae (strain B728a), this protein is NADPH-dependent 7-cyano-7-deazaguanine reductase.